Consider the following 393-residue polypeptide: MALPRSQGHWSNKDILRLLECMENNRPSDDNSTFSSTQSHMDWGKVAFKNFSGEMCRLKWLEISCNLRKFGTLKELVLEAKKCVKKMNKSQKYRNGPDFPKRPLTAYNRFFKESWPQYSQMYPGMRSQELTKILSKKYRELPEQMKQKYIQDFRKEKQEFEEKLARFREEHPDLVQKAKKSSVSKRTQNKVQKKFQKNIEEVRSLPKTDRFFKKVKFHGEPQKPPMNGYHKFHQDSWSSKEMQHLSVRERMVEIGRRWQRIPQSQKDHFKSQAEELQKQYKVKLDLWLKTLSPENYAAYKESTYAKGKNMAMTGGPDPRLKQADPQSSSAKGLQEGFGEGQGLQAAGTDSSQTIWVNCHVSMEPEENRKKDREKEESSNSSDCSSGEEIEVDV.

2 consecutive DNA-binding regions (HMG box) follow at residues 100–168 (PKRP…ARFR) and 222–288 (QKPP…DLWL). Residues 308-393 (KNMAMTGGPD…SSGEEIEVDV (86 aa)) are disordered. Basic and acidic residues predominate over residues 365–377 (EENRKKDREKEES).

The protein localises to the cytoplasm. It localises to the nucleus. Functionally, essential for proliferation of the inner cell mass and trophectodermal cells in peri-implantation development. In Homo sapiens (Human), this protein is Upstream-binding factor 1-like protein 1.